The primary structure comprises 325 residues: Palmitoyltransferase PFA3 (325 aa).

Residues 1-8 are Cytoplasmic-facing; it reads MHICSLIP. A helical transmembrane segment spans residues 9-29; sequence ILFPKLLTCGLALYSAVVLWL. Lys-30 is a topological domain (lumenal). The helical transmembrane segment at 31 to 51 threads the bilayer; it reads VSVIGSFIQGTVLLTLVPLIL. The Cytoplasmic segment spans residues 52–147; sequence YAYFSTIAVG…PGCIGYNNHK (96 aa). A DHHC domain is found at 104-154; it reads RYCVKCKVWKPDRCHHCSACDKCYLRRDHHCVWFPGCIGYNNHKFFLHFLL. The helical transmembrane segment at 148–168 threads the bilayer; sequence FFLHFLLYASVYAFWICIITT. Over 169–188 the chain is Lumenal; sequence WDLVVWFRAHSYERELLNVH. Residues 189 to 209 traverse the membrane as a helical segment; it reads LVCLWALSAAATVALTAFCAF. Residues 210–325 lie on the Cytoplasmic side of the membrane; the sequence is NIYLVCKNET…TRFNSKRAVQ (116 aa).

This sequence belongs to the DHHC palmitoyltransferase family. PFA3 subfamily. Post-translationally, autopalmitoylated.

It is found in the vacuole membrane. It catalyses the reaction L-cysteinyl-[protein] + hexadecanoyl-CoA = S-hexadecanoyl-L-cysteinyl-[protein] + CoA. Functionally, palmitoyltransferase specific for VAC8. Palmitoylates VAC8 at one or more of its N-terminal cysteine residues, which is required for its proper membrane localization. The sequence is that of Palmitoyltransferase PFA3 (PFA3) from Eremothecium gossypii (strain ATCC 10895 / CBS 109.51 / FGSC 9923 / NRRL Y-1056) (Yeast).